The following is an 88-amino-acid chain: Small ribosomal subunit protein bS20 (88 aa).

A disordered region spans residues 1–25 (MANSAQARKRVRQNNTRRQHAASQR). Basic residues predominate over residues 7 to 20 (ARKRVRQNNTRRQH).

This sequence belongs to the bacterial ribosomal protein bS20 family.

In terms of biological role, binds directly to 16S ribosomal RNA. The protein is Small ribosomal subunit protein bS20 of Psychrobacter sp. (strain PRwf-1).